Here is a 557-residue protein sequence, read N- to C-terminus: Anti-Muellerian hormone type-2 receptor (557 aa).

An N-terminal signal peptide occupies residues 1 to 17; it reads MLGTLGLWTLLPAAAQV. The Extracellular segment spans residues 18–144; that stretch reads SPNRRTCVFF…QEPQATPGGP (127 aa). Disulfide bonds link Cys-55–Cys-79 and Cys-92–Cys-109. The N-linked (GlcNAc...) asparagine glycan is linked to Asn-66. N-linked (GlcNAc...) asparagine glycosylation occurs at Asn-119. A helical membrane pass occupies residues 145-165; that stretch reads IWMAQLLLGVFLVLLLSIIIL. The Cytoplasmic segment spans residues 166 to 557; the sequence is ALLQRKACRV…SVQQGSGSKS (392 aa). Residues 201–511 enclose the Protein kinase domain; that stretch reads LRFSQVIQEG…RLAALAYPQV (311 aa). ATP is bound by residues 207–215 and Lys-228; that span reads IQEGGHAVV. Asp-331 acts as the Proton acceptor in catalysis.

The protein belongs to the protein kinase superfamily. TKL Ser/Thr protein kinase family. TGFB receptor subfamily. Interacts with type I receptor ACVR1. Requires Mg(2+) as cofactor. The cofactor is Mn(2+).

Its subcellular location is the membrane. It carries out the reaction L-threonyl-[receptor-protein] + ATP = O-phospho-L-threonyl-[receptor-protein] + ADP + H(+). The catalysed reaction is L-seryl-[receptor-protein] + ATP = O-phospho-L-seryl-[receptor-protein] + ADP + H(+). Functionally, on ligand binding, forms a receptor complex consisting of two type II and two type I transmembrane serine/threonine kinases. Type II receptors phosphorylate and activate type I receptors which autophosphorylate, then bind and activate SMAD transcriptional regulators. Receptor for anti-Muellerian hormone. The chain is Anti-Muellerian hormone type-2 receptor (Amhr2) from Rattus norvegicus (Rat).